We begin with the raw amino-acid sequence, 85 residues long: Large ribosomal subunit protein bL27 (85 aa).

The tract at residues 1–20 (MAHKKGGGTTRNGRDSESKR) is disordered.

It belongs to the bacterial ribosomal protein bL27 family.

This is Large ribosomal subunit protein bL27 from Herminiimonas arsenicoxydans.